A 447-amino-acid chain; its full sequence is ATP-dependent protease ATPase subunit HslU (447 aa).

ATP-binding positions include I17, G59–E64, D256, E321, and R393.

This sequence belongs to the ClpX chaperone family. HslU subfamily. As to quaternary structure, a double ring-shaped homohexamer of HslV is capped on each side by a ring-shaped HslU homohexamer. The assembly of the HslU/HslV complex is dependent on binding of ATP.

The protein localises to the cytoplasm. ATPase subunit of a proteasome-like degradation complex; this subunit has chaperone activity. The binding of ATP and its subsequent hydrolysis by HslU are essential for unfolding of protein substrates subsequently hydrolyzed by HslV. HslU recognizes the N-terminal part of its protein substrates and unfolds these before they are guided to HslV for hydrolysis. This Pseudomonas putida (strain GB-1) protein is ATP-dependent protease ATPase subunit HslU.